Here is a 1669-residue protein sequence, read N- to C-terminus: Collagen alpha-1(IV) chain (1669 aa).

A signal peptide spans 1-27 (MGPRLSVWLLLLFAALLLHEERSRAAA). A propeptide spans 28-172 (KGDCGGSGCG…LGHVPGTLLK (145 aa)) (N-terminal propeptide (7S domain)). The tract at residues 47-1443 (QKGERGLPGL…MGPPGTPSVD (1397 aa)) is disordered. The segment covering 92–104 (TRGPPGAAGYPGN) has biased composition (low complexity). N-linked (GlcNAc...) asparagine glycosylation is present at asparagine 126. The triple-helical region stretch occupies residues 173–1440 (GERGFPGIPG…PGSMGPPGTP (1268 aa)). Over residues 196–214 (VGPPGFTGPPGPPGPPGPP) the composition is skewed to pro residues. Residues proline 204, proline 207, and proline 210 each carry the 3-hydroxyproline modification. Residues 234–247 (QGVSGPPGVPGQAQ) show a composition bias toward low complexity. A compositionally biased stretch (basic and acidic residues) spans 289–298 (PGKDGEKGER). Pro residues predominate over residues 367 to 376 (PGQPGPPGFP). The span at 377 to 387 (TPGQAGAPGFP) shows a compositional bias: low complexity. Composition is skewed to pro residues over residues 413–424 (PGPPGPPGPPGQ) and 436–448 (PGPP…PGTP). A compositionally biased stretch (low complexity) spans 485–494 (PGEIGFPGQP). Composition is skewed to basic and acidic residues over residues 497–508 (KGDRGLPGRDGL) and 535–545 (FDMRLKGDKGD). The segment covering 586–595 (GPPGGVGFPG) has biased composition (gly residues). 2 positions are modified to 3-hydroxyproline: proline 587 and proline 602. 4-hydroxyproline is present on proline 603. Position 605 is a 3-hydroxyproline (proline 605). Proline 606 is modified (4-hydroxyproline). Residues 611 to 620 (IGPVGEKGQA) show a composition bias toward low complexity. A compositionally biased stretch (gly residues) spans 621–630 (GFPGGPGSPG). 4-hydroxyproline is present on residues proline 623, proline 626, proline 629, and proline 632. Residue proline 647 is modified to 3-hydroxyproline. The segment covering 715–731 (RPGFNGLPGNPGPQGQK) has biased composition (low complexity). Residues 758 to 767 (GSIGGPGVPG) show a composition bias toward gly residues. Pro residues predominate over residues 784 to 802 (PGPPGVQGPAGPPGVPGIG). Residues 803 to 817 (PPGAMGPPGGQGPPG) show a composition bias toward gly residues. Composition is skewed to low complexity over residues 847 to 875 (SQGL…PGFP) and 994 to 1003 (DPGLSGTPGS). Positions 1011–1020 (GSVGGMGLPG) are enriched in gly residues. Proline 1214 is modified (3-hydroxyproline). Low complexity predominate over residues 1220-1230 (QPGLPGTPGHP). A compositionally biased stretch (pro residues) spans 1247-1258 (PGHPGPMGPPGF). Residues 1290–1299 (GMPGIGGSPG) are compositionally biased toward gly residues. Low complexity-rich tracts occupy residues 1333-1343 (DQGVPGPKGLQ), 1368-1391 (PGLK…SVGL), and 1398-1412 (PGFD…ETGP). Residues 1413 to 1428 (FGPPGPRGFPGPPGPD) are compositionally biased toward pro residues. Residue proline 1424 is modified to 3-hydroxyproline. The region spanning 1445 to 1669 (GFLVTRHSQT…SRCQVCMRRT (225 aa)) is the Collagen IV NC1 domain. 6 cysteine pairs are disulfide-bonded: cysteine 1460-cysteine 1551, cysteine 1493-cysteine 1548, cysteine 1505-cysteine 1511, cysteine 1570-cysteine 1665, cysteine 1604-cysteine 1662, and cysteine 1616-cysteine 1622. Residue methionine 1533 forms an S-Lysyl-methionine sulfilimine (Met-Lys) (interchain with K-1651) linkage. Lysine 1651 participates in a covalent cross-link: S-Lysyl-methionine sulfilimine (Lys-Met) (interchain with M-1533).

Belongs to the type IV collagen family. There are six type IV collagen isoforms, alpha 1(IV)-alpha 6(IV), each of which can form a triple helix structure with 2 other chains to generate type IV collagen network. Interacts with EFEMP2. Post-translationally, lysines at the third position of the tripeptide repeating unit (G-X-Y) are hydroxylated. The modified lysines can be O-glycosylated. In terms of processing, contains 4-hydroxyproline. Prolines at the third position of the tripeptide repeating unit (G-X-Y) are hydroxylated in some or all of the chains. Contains 3-hydroxyproline. This modification occurs on the first proline residue in the sequence motif Gly-Pro-Hyp, where Hyp is 4-hydroxyproline. Post-translationally, type IV collagens contain numerous cysteine residues which are involved in inter- and intramolecular disulfide bonding. 12 of these, located in the NC1 domain, are conserved in all known type IV collagens. In terms of processing, the trimeric structure of the NC1 domains is stabilized by covalent bonds (sulfilimine cross-links) between Lys and Met residues. These cross-links are important for the mechanical stability of the basement membrane. Sulfilimine cross-link is catalyzed by PXDN. Proteolytic processing produces the C-terminal NC1 peptide, arresten. Detected in the basement membrane of the cornea (at protein level).

Its subcellular location is the secreted. The protein resides in the extracellular space. It localises to the extracellular matrix. The protein localises to the basement membrane. Functionally, type IV collagen is the major structural component of glomerular basement membranes (GBM), forming a 'chicken-wire' meshwork together with laminins, proteoglycans and entactin/nidogen. In terms of biological role, arresten, comprising the C-terminal NC1 domain, inhibits angiogenesis and tumor formation. The C-terminal half is found to possess the anti-angiogenic activity. Specifically inhibits endothelial cell proliferation, migration and tube formation. This Mus musculus (Mouse) protein is Collagen alpha-1(IV) chain.